A 195-amino-acid chain; its full sequence is Large ribosomal subunit protein bL25 (195 aa).

This sequence belongs to the bacterial ribosomal protein bL25 family. CTC subfamily. In terms of assembly, part of the 50S ribosomal subunit; part of the 5S rRNA/L5/L18/L25 subcomplex. Contacts the 5S rRNA. Binds to the 5S rRNA independently of L5 and L18.

In terms of biological role, this is one of the proteins that binds to the 5S RNA in the ribosome where it forms part of the central protuberance. The chain is Large ribosomal subunit protein bL25 from Geobacter metallireducens (strain ATCC 53774 / DSM 7210 / GS-15).